A 3583-amino-acid chain; its full sequence is Surfactin synthase subunit 2 (3583 aa).

Carrier domains lie at 965-1039 (APKT…EENE), 2005-2080 (APET…EASA), and 3034-3108 (APTT…ERAE). Residues S999, S2040, and S3069 each carry the O-(pantetheine 4'-phosphoryl)serine modification.

This sequence belongs to the ATP-dependent AMP-binding enzyme family. It depends on pantetheine 4'-phosphate as a cofactor.

It functions in the pathway antibiotic biosynthesis; surfactin biosynthesis. Its function is as follows. This protein is a multifunctional enzyme able to activate and polymerize the amino acids Leu, Glu, Asp and Val. Activation sites for these AA consist of individual domains. This chain is Surfactin synthase subunit 2 (srfAB), found in Bacillus subtilis (strain 168).